The chain runs to 460 residues: ATP synthase subunit beta (460 aa).

150-157 (GGAGVGKT) is an ATP binding site.

It belongs to the ATPase alpha/beta chains family. F-type ATPases have 2 components, CF(1) - the catalytic core - and CF(0) - the membrane proton channel. CF(1) has five subunits: alpha(3), beta(3), gamma(1), delta(1), epsilon(1). CF(0) has three main subunits: a(1), b(2) and c(9-12). The alpha and beta chains form an alternating ring which encloses part of the gamma chain. CF(1) is attached to CF(0) by a central stalk formed by the gamma and epsilon chains, while a peripheral stalk is formed by the delta and b chains.

It localises to the cell inner membrane. The enzyme catalyses ATP + H2O + 4 H(+)(in) = ADP + phosphate + 5 H(+)(out). Functionally, produces ATP from ADP in the presence of a proton gradient across the membrane. The catalytic sites are hosted primarily by the beta subunits. The polypeptide is ATP synthase subunit beta (Pectobacterium atrosepticum (strain SCRI 1043 / ATCC BAA-672) (Erwinia carotovora subsp. atroseptica)).